Here is a 300-residue protein sequence, read N- to C-terminus: Protein sprouty homolog 4 (300 aa).

An N-acetylmethionine modification is found at methionine 1. Disordered stretches follow at residues 1 to 28 and 52 to 114; these read MEPP…SRAP and DYID…RLLD. Composition is skewed to low complexity over residues 7–21 and 92–108; these read QSSV…MVQP and SFSG…STSS. Serine 126 is subject to Phosphoserine. The SPR domain maps to 167 to 274; the sequence is KCKECASPRT…GYDRLRRPGC (108 aa).

It belongs to the sprouty family. In terms of assembly, interacts (via C-terminus) with TESK1 (via both C- and N-termini); the interaction inhibits TESK1 kinase activity. Interacts with RAF1. Interacts with CAV1 (via C-terminus). As to expression, expressed in the embryo and adult tissues including heart, brain, lung, kidney, and skeletal muscle.

The protein resides in the cytoplasm. Its subcellular location is the cell projection. The protein localises to the ruffle membrane. In terms of biological role, suppresses the insulin receptor and EGFR-transduced MAPK signaling pathway, but does not inhibit MAPK activation by a constitutively active mutant Ras. Probably impairs the formation of GTP-Ras. Inhibits Ras-independent, but not Ras-dependent, activation of RAF1. Represses integrin-mediated cell spreading via inhibition of TESK1-mediated phosphorylation of cofilin. The chain is Protein sprouty homolog 4 (Spry4) from Mus musculus (Mouse).